Consider the following 337-residue polypeptide: Basic membrane protein A1 (337 aa).

Positions 1-17 (MNKLLLLILFECIIFLS) are cleaved as a signal peptide. A lipid anchor (N-palmitoyl cysteine) is attached at cysteine 18. A lipid anchor (S-diacylglycerol cysteine) is attached at cysteine 18.

This sequence belongs to the BMP lipoprotein family. As to quaternary structure, monomer.

It localises to the cell inner membrane. Immunogenic protein. May be part of an ABC-type nucleoside uptake system involved in the purine salvage pathway. The protein is Basic membrane protein A1 (bmpA1) of Borrelia garinii subsp. bavariensis (strain ATCC BAA-2496 / DSM 23469 / PBi) (Borreliella bavariensis).